A 78-amino-acid polypeptide reads, in one-letter code: Major outer membrane lipoprotein Lpp (78 aa).

An N-terminal signal peptide occupies residues 1-20 (MNRTKLVLGAVILASTMLAG). Cysteine 21 carries N-palmitoyl cysteine lipidation. Cysteine 21 carries the S-diacylglycerol cysteine lipid modification. 2 consecutive repeats follow at residues 24–34 (NAKIDQLSSDV) and 38–48 (NAKVDQLSNDV). Residues 27 to 75 (IDQLSSDVQTLNAKVDQLSNDVNAVRADVQAAKDDAARANQRLDNQAQA) adopt a coiled-coil conformation. N6-murein peptidoglycan lysine is present on lysine 78.

The protein belongs to the Lpp family. As to quaternary structure, homotrimer.

The protein resides in the cell outer membrane. It localises to the secreted. Its subcellular location is the cell wall. In terms of biological role, a highly abundant outer membrane lipoprotein that controls the distance between the inner and outer membranes. The only protein known to be covalently linked to the peptidoglycan network (PGN). Also non-covalently binds the PGN. The link between the cell outer membrane and PGN contributes to maintenance of the structural and functional integrity of the cell envelope, and maintains the correct distance between the PGN and the outer membrane. This is Major outer membrane lipoprotein Lpp from Yersinia pestis.